The chain runs to 1170 residues: MNELNTVSTNSSDSTKNGGTSNSPDDMDSAAAASHAIKKRTKASRACDQCRKKKIKCDYKDEKGVCSNCQRNGDRCSFDRVPLKRGPSKGYTRSTSHPRTNEIQDHNNSRSYNTFDNSNNTLNNNTGNSGDNGINSNTVPSTPSRSNSVLLPPLTQYIPQAGGIPPSFQNPAIQSTMPAGNIGQQQFWKVPYHEFQHQRKGSIDSLQSDISVRTLNPNEQLSYNTVQQSPITNKHTNDSGNANGSVTGSGSASGSGGYWSFIRTSGLLAPTDDHNGEQTRRSSSIPSLLRNTSNSLLLGGQPQLPPPQQQSQPQAHQQKLQQGQNLYSYSQFSQQQPYNPSISSFGQFAANGFHSRQGSVASEAMSPSAPAMFTSTSTNPVNVAQQTQRPQGQQVPQFSSELDGNKRRQSAPVSVTLSTDRLNGNENNNGEINNNNGSNNSGSSKDTSQHSQESVTTPAALEASSPGSTPQRSTKKRRKSYVSKKTKPKRDSSISITSKDSAHPMTTSSTIAYGQISDVDLIDTYYEFIHVGFPIIPLNKTTLTSDLLLVNTQPISNIHEVNSYVILWFRNSLELLVRVALKQKPGGKFFDNIVGVALSPSNDNNKAGFTTATARDDAEKTRRDSHNEVQDTLEVQSVFIAALNECFQKIVDIHPKFRENNDQISPKIKVIYLSTFILLNYILAFVGYDNSFVLGMSVTIFNEFKLYKLLLFPEPDINDVKPPVDEEVSTGNGNTKTSEFEIGSESAGHMNPSNSPNSMDENISHYSVLFKRLYVLLSVFDSLQSCAFGGPKLLNISIQGSTERFFSNDLGSKWCLEQSQLRLKSVLQSLKLGELMSELTRNRISMNGNRKPGFDITNSSSLLSEYVETQPLSVAQLFCKLLIGKHNFINCLLSLYDSEAGVYSDLTLDLSSKIADSLCSLISIILQVLTLILRLNPTNSIDFNYRPPNPPANNPTVQEGPSAMGSSPVAGNLSAAPPSEGNPDFYKKLLGLKQDTGTILSDLCRGIISPFAIAILHEVYNITELVKQMPTSLISIMMTATTTQNTQDTKKSQDLVMKLSNSMNEVVQITSVLTMIKPFKIFEHELNKPIMSLTGGLSSTTRNDVMWPKSGQGLRESSVMKTLLDERRTSGTQPTTAPVAAEEPRLENVALENFVSIGWKLLDDSELGWY.

Residues 1 to 22 are compositionally biased toward polar residues; the sequence is MNELNTVSTNSSDSTKNGGTSN. The segment at 1–46 is disordered; the sequence is MNELNTVSTNSSDSTKNGGTSNSPDDMDSAAAASHAIKKRTKASRA. The segment at residues 47-76 is a DNA-binding region (zn(2)-C6 fungal-type); that stretch reads CDQCRKKKIKCDYKDEKGVCSNCQRNGDRC. The tract at residues 77–149 is disordered; it reads SFDRVPLKRG…PSTPSRSNSV (73 aa). Basic and acidic residues predominate over residues 99-108; that stretch reads RTNEIQDHNN. Low complexity predominate over residues 113–138; sequence NTFDNSNNTLNNNTGNSGDNGINSNT. Positions 139–149 are enriched in polar residues; it reads VPSTPSRSNSV. S202, S205, S208, and S229 each carry phosphoserine. 5 disordered regions span residues 226-254, 269-288, 293-323, 384-506, and 944-977; these read VQQS…SASG, APTD…IPSL, SNSL…LQQG, AQQT…HPMT, and NYRP…SAAP. Over residues 239 to 250 the composition is skewed to low complexity; that stretch reads SGNANGSVTGSG. Residues 271-280 are compositionally biased toward basic and acidic residues; it reads TDDHNGEQTR. 2 positions are modified to phosphoserine: S283 and S284. Low complexity-rich tracts occupy residues 293-302, 309-323, and 385-397; these read SNSLLLGGQP, QQSQ…LQQG, and QQTQ…QVPQ. Phosphoserine is present on residues S410 and S414. Residues 411 to 422 show a composition bias toward polar residues; sequence APVSVTLSTDRL. Residues 424 to 444 are compositionally biased toward low complexity; the sequence is GNENNNGEINNNNGSNNSGSS. Over residues 445–457 the composition is skewed to polar residues; it reads KDTSQHSQESVTT. The segment covering 473–488 has biased composition (basic residues); the sequence is STKKRRKSYVSKKTKP. A compositionally biased stretch (polar residues) spans 493-506; that stretch reads SISITSKDSAHPMT. S1130 is subject to Phosphoserine.

Belongs to the EDS1/RGT1 family. Post-translationally, glucose-induced phosphorylation regulates the DNA-binding activity. Hyperphosphorylation in cells growing on high levels of glucose does prevents DNA-binding and dephosphorylation restores DNA-binding ability.

It is found in the nucleus. It localises to the cytoplasm. Functionally, glucose-responsive transcription factor that regulates expression of several glucose transporter (HXT) genes in response to glucose. In the absence of glucose, it functions as a transcriptional repressor, whereas high concentrations of glucose cause it to function as a transcriptional activator. In cells growing on low levels of glucose, has a neutral role, neither repressing nor activating transcription. Binds the consensus binding site sequence 5'-CGGANNA-3', of which multiple copies are present in all HXT promoters regulated by RGT1. The polypeptide is Glucose transport transcription regulator RGT1 (RGT1) (Saccharomyces cerevisiae (strain RM11-1a) (Baker's yeast)).